A 346-amino-acid polypeptide reads, in one-letter code: Beta-hexosaminidase (346 aa).

Residues Asp-62, Arg-70, Arg-134, and 164–165 (KH) each bind substrate. Residue His-177 is the Proton donor/acceptor of the active site. The active-site Nucleophile is Asp-249.

It belongs to the glycosyl hydrolase 3 family. NagZ subfamily.

It is found in the cytoplasm. It carries out the reaction Hydrolysis of terminal non-reducing N-acetyl-D-hexosamine residues in N-acetyl-beta-D-hexosaminides.. It functions in the pathway cell wall biogenesis; peptidoglycan recycling. Its function is as follows. Plays a role in peptidoglycan recycling by cleaving the terminal beta-1,4-linked N-acetylglucosamine (GlcNAc) from peptide-linked peptidoglycan fragments, giving rise to free GlcNAc, anhydro-N-acetylmuramic acid and anhydro-N-acetylmuramic acid-linked peptides. The polypeptide is Beta-hexosaminidase (Actinobacillus succinogenes (strain ATCC 55618 / DSM 22257 / CCUG 43843 / 130Z)).